The sequence spans 568 residues: Urease subunit alpha (568 aa).

Residues 132-568 (GAIDTHVHYI…LPLAQLYNLF (437 aa)) enclose the Urease domain. 3 residues coordinate Ni(2+): His-137, His-139, and Lys-219. Lys-219 carries the N6-carboxylysine modification. His-221 serves as a coordination point for substrate. Positions 248 and 274 each coordinate Ni(2+). His-322 (proton donor) is an active-site residue. Asp-362 is a binding site for Ni(2+).

The protein belongs to the metallo-dependent hydrolases superfamily. Urease alpha subunit family. In terms of assembly, heterotrimer of UreA (gamma), UreB (beta) and UreC (alpha) subunits. Three heterotrimers associate to form the active enzyme. Ni cation serves as cofactor. Carboxylation allows a single lysine to coordinate two nickel ions.

Its subcellular location is the cytoplasm. The enzyme catalyses urea + 2 H2O + H(+) = hydrogencarbonate + 2 NH4(+). Its pathway is nitrogen metabolism; urea degradation; CO(2) and NH(3) from urea (urease route): step 1/1. In Azobacteroides pseudotrichonymphae genomovar. CFP2, this protein is Urease subunit alpha.